The primary structure comprises 376 residues: Glutamate 5-kinase (376 aa).

Residue Lys18 participates in ATP binding. Substrate is bound by residues Ser58, Asp145, and Asn157. Residues 177-178 and 218-224 each bind ATP; these read SD and TGGMASK. Residues 280–358 enclose the PUA domain; sequence TGALTLDAGA…SELPGELRRP (79 aa).

It belongs to the glutamate 5-kinase family.

Its subcellular location is the cytoplasm. The enzyme catalyses L-glutamate + ATP = L-glutamyl 5-phosphate + ADP. It functions in the pathway amino-acid biosynthesis; L-proline biosynthesis; L-glutamate 5-semialdehyde from L-glutamate: step 1/2. In terms of biological role, catalyzes the transfer of a phosphate group to glutamate to form L-glutamate 5-phosphate. The polypeptide is Glutamate 5-kinase (Mycobacterium tuberculosis (strain ATCC 25177 / H37Ra)).